Reading from the N-terminus, the 581-residue chain is Putative adenine deaminase BH0637 (581 aa).

It belongs to the metallo-dependent hydrolases superfamily. Adenine deaminase family.

It catalyses the reaction adenine + H2O + H(+) = hypoxanthine + NH4(+). The polypeptide is Putative adenine deaminase BH0637 (Halalkalibacterium halodurans (strain ATCC BAA-125 / DSM 18197 / FERM 7344 / JCM 9153 / C-125) (Bacillus halodurans)).